We begin with the raw amino-acid sequence, 185 residues long: Ribosome-recycling factor (185 aa).

Positions 135 to 159 (ANDEVKKLEKDKAITEDESKKGQDE) are disordered.

Belongs to the RRF family.

It localises to the cytoplasm. Its function is as follows. Responsible for the release of ribosomes from messenger RNA at the termination of protein biosynthesis. May increase the efficiency of translation by recycling ribosomes from one round of translation to another. This is Ribosome-recycling factor from Campylobacter curvus (strain 525.92).